The sequence spans 509 residues: MEELQEYLKIEKSWQQDFLYPLFFQEYIYTLAHDHGLNRSILYESAENLGYDNKSSSLIVKRFIDRMYQQNHFIISSNSNSSNQKKFLGHNKNLDLKIISEGFAVIVEIPFSLRLVSSLEGKELVKSCNLRSIHSIFSFLEDKFSHLNYVSDILIPHPIHPEILVQAFRVWVQDVPSLHLLRFFLYEYRNWNSLITPKKSIYTFSKENQRFFLFLYNFYVYKYESMFVFLRKQSSHLRSTSFGALLERTHFYGKREHLVVLFRNDFQSTLCLVKDPFIHYVRYQAKSFLAARGTPLMMNKWKYYLVNFWQSYFYFWSQPGRIHINQLSNYSLDFLGYLSSVRLTFSVVRSQMLENSFLIDIAIKKFDTIVPIIPLLGSLAKAKFCNALGHPISKPVRTASSDFDIIDRFGRICKNLFHYHSGSSKKKSLYRIKYILRLSCARTLARKHKSTVRAFLKRLGSELFEEFFTEEEEVLSLIFPRASSPLRRLYRERVWYLDIIRISDLVNHD.

It belongs to the intron maturase 2 family. MatK subfamily.

It localises to the plastid. It is found in the chloroplast. Usually encoded in the trnK tRNA gene intron. Probably assists in splicing its own and other chloroplast group II introns. The protein is Maturase K of Banksia cuneata (Quairading banksia).